The chain runs to 1154 residues: uncharacterized protein (1154 aa).

Positions 1–18 (MKRNIFIKLLISLLLLSS) are cleaved as a signal peptide. Cysteine 19 carries N-palmitoyl cysteine lipidation. Cysteine 19 is lipidated: S-diacylglycerol cysteine. 4 consecutive transmembrane segments (helical) span residues 288 to 308 (ISVS…FLIG), 394 to 414 (LGFI…FLIF), 423 to 443 (ALIT…FMLF), and 458 to 478 (ISYA…SMII).

Belongs to the TrbL/VirB6 family.

The protein resides in the cell membrane. This is an uncharacterized protein from Rickettsia typhi (strain ATCC VR-144 / Wilmington).